Reading from the N-terminus, the 423-residue chain is Glutamyl-tRNA reductase (423 aa).

Substrate-binding positions include 49–52 (TCNR), Ser-107, 112–114 (EPQ), and Gln-118. The Nucleophile role is filled by Cys-50. 187–192 (GAGETI) provides a ligand contact to NADP(+).

It belongs to the glutamyl-tRNA reductase family. In terms of assembly, homodimer.

The catalysed reaction is (S)-4-amino-5-oxopentanoate + tRNA(Glu) + NADP(+) = L-glutamyl-tRNA(Glu) + NADPH + H(+). The protein operates within porphyrin-containing compound metabolism; protoporphyrin-IX biosynthesis; 5-aminolevulinate from L-glutamyl-tRNA(Glu): step 1/2. Its function is as follows. Catalyzes the NADPH-dependent reduction of glutamyl-tRNA(Glu) to glutamate 1-semialdehyde (GSA). This is Glutamyl-tRNA reductase from Pseudoalteromonas atlantica (strain T6c / ATCC BAA-1087).